The primary structure comprises 271 residues: Aminoglycoside 3'-phosphotransferase (271 aa).

Asp198 serves as the catalytic Proton acceptor.

Belongs to the aminoglycoside phosphotransferase family.

It catalyses the reaction kanamycin A + ATP = kanamycin 3'-phosphate + ADP + H(+). In terms of biological role, resistance to kanamycin and structurally-related aminoglycosides, including amikacin. The chain is Aminoglycoside 3'-phosphotransferase from Salmonella typhimurium.